Here is a 156-residue protein sequence, read N- to C-terminus: Small ribosomal subunit protein uS7 (156 aa).

Belongs to the universal ribosomal protein uS7 family. Part of the 30S ribosomal subunit. Contacts proteins S9 and S11.

Its function is as follows. One of the primary rRNA binding proteins, it binds directly to 16S rRNA where it nucleates assembly of the head domain of the 30S subunit. Is located at the subunit interface close to the decoding center, probably blocks exit of the E-site tRNA. The chain is Small ribosomal subunit protein uS7 from Methylocella silvestris (strain DSM 15510 / CIP 108128 / LMG 27833 / NCIMB 13906 / BL2).